The chain runs to 192 residues: MTEYVLLLVGTVLVNNFVLVKFLGLCPFMGVSKKLETAIGMGLATTFVLTLASVCAYLVESYILRPLGIEYLRTMSFILVIAVVVQFTEMVVHKTSPTLYRLLGIFLPLITTNCAVLGVALLNINENHNFIESIIYGFGAAVGFSLVLILFASMRERIAAADVPVPFKGASIAMITAGLMSLAFMGFTGLVK.

The next 6 helical transmembrane spans lie at 5-25 (VLLLVGTVLVNNFVLVKFLGL), 39-59 (IGMGLATTFVLTLASVCAYLV), 67-87 (LGIEYLRTMSFILVIAVVVQF), 102-122 (LLGIFLPLITTNCAVLGVALL), 134-154 (IIYGFGAAVGFSLVLILFASM), and 171-191 (SIAMITAGLMSLAFMGFTGLV).

Belongs to the NqrDE/RnfAE family. In terms of assembly, the complex is composed of six subunits: RnfA, RnfB, RnfC, RnfD, RnfE and RnfG.

It localises to the cell inner membrane. Its function is as follows. Part of a membrane-bound complex that couples electron transfer with translocation of ions across the membrane. The protein is Ion-translocating oxidoreductase complex subunit A of Vibrio parahaemolyticus serotype O3:K6 (strain RIMD 2210633).